Here is a 429-residue protein sequence, read N- to C-terminus: MLSMLLPFGNSGVYASDVDREDRPEIAKLVQAFPTIEEDYHVVKLVGAGSFSSVFKAVDRHFDSYDNSYWISSQIEDQMPHDKTKRPKNHFVALKRIYATVLPSRIQTELEMLHELRGSDCVLNMITAVRHQDQVLIVLPFIQHAEFRDFYMKYSLPEIGAYLRDLLKGLAHIDAKGIIHRDIKPGNFAWNPYTQRGVILDFGLAQWQEADAPTENCCVDKLRKLKQEGKYYDYFPFEKTIADPPEGYLLHDPRPTKRADRAGTRGFRAPEVLFRCQNQTSSIDVWSVGVILLCFLTHRYPFFRCEDDIDAIVELAHIFGRNGMSNCALLHGQIWSDNIPTLLDQKHNWLDLIASITKNDENLILETSSDYQVALAIDLLDKLLELHPSKRVKAKTALQHEFFNACGVTRSGFEAENPFRSDFPSTVEQ.

The region spanning 40-402 (YHVVKLVGAG…KAKTALQHEF (363 aa)) is the Protein kinase domain. ATP is bound by residues 46-54 (VGAGSFSSV) and lysine 95. Aspartate 182 serves as the catalytic Proton acceptor. Threonine 264 carries the post-translational modification Phosphothreonine.

The protein belongs to the protein kinase superfamily. Ser/Thr protein kinase family. CDC7 subfamily. In terms of assembly, interacts with spo6.

The protein localises to the nucleus. The catalysed reaction is L-seryl-[protein] + ATP = O-phospho-L-seryl-[protein] + ADP + H(+). It catalyses the reaction L-threonyl-[protein] + ATP = O-phospho-L-threonyl-[protein] + ADP + H(+). In terms of biological role, required for the initiation of meiosis II and progression through anaphase II. The sequence is that of Cell cycle protein kinase spo4 (spo4) from Schizosaccharomyces pombe (strain 972 / ATCC 24843) (Fission yeast).